Reading from the N-terminus, the 438-residue chain is Chromosomal replication initiator protein DnaA (438 aa).

The interval 1–68 is domain I, interacts with DnaA modulators; the sequence is MKDNILSALK…VVKESLGKDA (68 aa). The tract at residues 68–98 is domain II; the sequence is ATFEIVYKEIDITQENEEKGPLVRKRPLLIT. The interval 99 to 314 is domain III, AAA+ region; that stretch reads PLNPKYTFEN…GAILKLIAYK (216 aa). Residues glycine 142, glycine 144, lysine 145, and threonine 146 each coordinate ATP. Residues 315 to 438 form a domain IV, binds dsDNA region; that stretch reads NLYGSLNLSI…TKNFAQGESI (124 aa).

This sequence belongs to the DnaA family. As to quaternary structure, oligomerizes as a right-handed, spiral filament on DNA at oriC.

The protein resides in the cytoplasm. Plays an essential role in the initiation and regulation of chromosomal replication. ATP-DnaA binds to the origin of replication (oriC) to initiate formation of the DNA replication initiation complex once per cell cycle. Binds the DnaA box (a 9 base pair repeat at the origin) and separates the double-stranded (ds)DNA. Forms a right-handed helical filament on oriC DNA; dsDNA binds to the exterior of the filament while single-stranded (ss)DNA is stabiized in the filament's interior. The ATP-DnaA-oriC complex binds and stabilizes one strand of the AT-rich DNA unwinding element (DUE), permitting loading of DNA polymerase. After initiation quickly degrades to an ADP-DnaA complex that is not apt for DNA replication. Binds acidic phospholipids. The chain is Chromosomal replication initiator protein DnaA from Thermosipho africanus (strain TCF52B).